The primary structure comprises 101 residues: Putative membrane protein insertion efficiency factor (101 aa).

The protein belongs to the UPF0161 family.

Its subcellular location is the cell inner membrane. Its function is as follows. Could be involved in insertion of integral membrane proteins into the membrane. This Methylobacterium sp. (strain 4-46) protein is Putative membrane protein insertion efficiency factor.